Here is a 404-residue protein sequence, read N- to C-terminus: Zinc transporter 10 (404 aa).

An N-terminal signal peptide occupies residues 1–22 (MESSSSSSYIPFIRQIAASVSA). Residues 23 to 49 (ASCDAVVGGGGDKDEECRDEAAALRLK) are Extracellular-facing. The helical transmembrane segment at 50–70 (MVAVAAILIAGAAGVAIPLVG) threads the bilayer. Topologically, residues 71-86 (RRRRGGGGGGGGGASS) are cytoplasmic. A helical transmembrane segment spans residues 87-107 (GGLFVLAKAFAAGVILATGFV). Residues 108–129 (HMLHDAEHALSNPCLPHSPWRR) are Extracellular-facing. A helical transmembrane segment spans residues 130-150 (FPFPGFVAMLAALATLVVDFV). Residues 151–248 (GTHFYERKHR…GHEEGPSARH (98 aa)) lie on the Cytoplasmic side of the membrane. The helical transmembrane segment at 249-269 (VVVSQILELGIVSHSVIIGLS) threads the bilayer. The Extracellular segment spans residues 270 to 280 (LGVSQSPCTIK). A helical membrane pass occupies residues 281 to 301 (PLVAALSFHQFFEGFALGGCI). Over 302–311 (SEAQLKNFSA) the chain is Cytoplasmic. A helical membrane pass occupies residues 312–332 (FLMAFFFAITTPAGITVGAAV). Residues 333–343 (ASFYNPNSPRA) lie on the Extracellular side of the membrane. Residues 344 to 364 (LVVEGILDSMSAGILIYMALV) traverse the membrane as a helical segment. Topologically, residues 365-383 (DLIAADFLSRKMSCNPRLQ) are cytoplasmic. Residues 384-404 (VGSYIALFLGAMAMAALALWA) traverse the membrane as a helical segment.

Belongs to the ZIP transporter (TC 2.A.5) family.

The protein localises to the cell membrane. Its function is as follows. Zinc transporter that may be involved in zinc uptake from the rhizosphere. This Oryza sativa subsp. japonica (Rice) protein is Zinc transporter 10 (ZIP10).